Here is a 186-residue protein sequence, read N- to C-terminus: Ribosome-recycling factor (186 aa).

It belongs to the RRF family.

The protein resides in the cytoplasm. Responsible for the release of ribosomes from messenger RNA at the termination of protein biosynthesis. May increase the efficiency of translation by recycling ribosomes from one round of translation to another. This chain is Ribosome-recycling factor, found in Rickettsia typhi (strain ATCC VR-144 / Wilmington).